Here is a 116-residue protein sequence, read N- to C-terminus: Subtilisin inhibitor-like protein 4 (116 aa).

Disulfide bonds link Cys38–Cys53 and Cys74–Cys104.

It belongs to the protease inhibitor I16 (SSI) family. Homodimer.

The protein resides in the secreted. In terms of biological role, inhibitor of subtilisin BPN' and trypsin. In Streptomyces lavendulae, this protein is Subtilisin inhibitor-like protein 4.